The sequence spans 206 residues: Large ribosomal subunit protein uL4 (206 aa).

This sequence belongs to the universal ribosomal protein uL4 family. As to quaternary structure, part of the 50S ribosomal subunit.

In terms of biological role, one of the primary rRNA binding proteins, this protein initially binds near the 5'-end of the 23S rRNA. It is important during the early stages of 50S assembly. It makes multiple contacts with different domains of the 23S rRNA in the assembled 50S subunit and ribosome. Forms part of the polypeptide exit tunnel. The protein is Large ribosomal subunit protein uL4 of Rhodopseudomonas palustris (strain BisA53).